The chain runs to 354 residues: uncharacterized protein (354 aa).

A helical membrane pass occupies residues 43 to 63 (LIAVTLWSCVGSLLFICLLAV).

The protein localises to the cell membrane. This is an uncharacterized protein from Bacillus subtilis (strain 168).